The sequence spans 383 residues: Acetylornithine deacetylase (383 aa).

Residue His-80 participates in Zn(2+) binding. Asp-82 is an active-site residue. A Zn(2+)-binding site is contributed by Asp-112. The active site involves Glu-144. Positions 145, 169, and 355 each coordinate Zn(2+).

This sequence belongs to the peptidase M20A family. ArgE subfamily. As to quaternary structure, homodimer. Zn(2+) serves as cofactor. Co(2+) is required as a cofactor. It depends on glutathione as a cofactor.

The protein localises to the cytoplasm. It carries out the reaction N(2)-acetyl-L-ornithine + H2O = L-ornithine + acetate. It functions in the pathway amino-acid biosynthesis; L-arginine biosynthesis; L-ornithine from N(2)-acetyl-L-ornithine (linear): step 1/1. Functionally, catalyzes the hydrolysis of the amide bond of N(2)-acetylated L-amino acids. Cleaves the acetyl group from N-acetyl-L-ornithine to form L-ornithine, an intermediate in L-arginine biosynthesis pathway, and a branchpoint in the synthesis of polyamines. This chain is Acetylornithine deacetylase, found in Salmonella choleraesuis (strain SC-B67).